A 648-amino-acid chain; its full sequence is Dystrotelin (648 aa).

The ZZ-type zinc-finger motif lies at 223–279 (QHRVHCHACKAFPITGLRYRCLKCLNVHLCQSCFLTERRSRKHKPSHSVLEYCTQPS). Zn(2+) is bound by residues C228, C231, C243, C246, C252, C255, H265, and H269. A coiled-coil region spans residues 367-446 (QRETAELQKD…LDTVRHLLSL (80 aa)). Positions 455 to 474 (SHSNLQLEQDGSINENNWTQ) are enriched in polar residues. Disordered stretches follow at residues 455 to 509 (SHSN…DTLY) and 536 to 557 (QREEEELQEEEEGLHEKEEGLP). Residues 479–502 (KPHESSSTEHEVEERGTRQERRFE) are compositionally biased toward basic and acidic residues. Residues 538 to 548 (EEEELQEEEEG) show a composition bias toward acidic residues.

It localises to the cell membrane. In Danio rerio (Zebrafish), this protein is Dystrotelin (dytn).